Consider the following 249-residue polypeptide: 1-(5-phosphoribosyl)-5-[(5-phosphoribosylamino)methylideneamino] imidazole-4-carboxamide isomerase (249 aa).

Catalysis depends on Asp8, which acts as the Proton acceptor. The Proton donor role is filled by Asp131.

It belongs to the HisA/HisF family.

Its subcellular location is the cytoplasm. It carries out the reaction 1-(5-phospho-beta-D-ribosyl)-5-[(5-phospho-beta-D-ribosylamino)methylideneamino]imidazole-4-carboxamide = 5-[(5-phospho-1-deoxy-D-ribulos-1-ylimino)methylamino]-1-(5-phospho-beta-D-ribosyl)imidazole-4-carboxamide. Its pathway is amino-acid biosynthesis; L-histidine biosynthesis; L-histidine from 5-phospho-alpha-D-ribose 1-diphosphate: step 4/9. This chain is 1-(5-phosphoribosyl)-5-[(5-phosphoribosylamino)methylideneamino] imidazole-4-carboxamide isomerase, found in Aromatoleum aromaticum (strain DSM 19018 / LMG 30748 / EbN1) (Azoarcus sp. (strain EbN1)).